Consider the following 635-residue polypeptide: tRNA 5-methylaminomethyl-2-thiouridine biosynthesis bifunctional protein MnmC (635 aa).

The tRNA (mnm(5)s(2)U34)-methyltransferase stretch occupies residues 1–227; it reads MSEPIDWLPD…KRSNLQAEFD (227 aa). An FAD-dependent cmnm(5)s(2)U34 oxidoreductase region spans residues 254–635; the sequence is IGGGLSGAAV…ALSTERLPAD (382 aa).

In the N-terminal section; belongs to the methyltransferase superfamily. tRNA (mnm(5)s(2)U34)-methyltransferase family. This sequence in the C-terminal section; belongs to the DAO family. FAD is required as a cofactor.

It is found in the cytoplasm. It catalyses the reaction 5-aminomethyl-2-thiouridine(34) in tRNA + S-adenosyl-L-methionine = 5-methylaminomethyl-2-thiouridine(34) in tRNA + S-adenosyl-L-homocysteine + H(+). Its function is as follows. Catalyzes the last two steps in the biosynthesis of 5-methylaminomethyl-2-thiouridine (mnm(5)s(2)U) at the wobble position (U34) in tRNA. Catalyzes the FAD-dependent demodification of cmnm(5)s(2)U34 to nm(5)s(2)U34, followed by the transfer of a methyl group from S-adenosyl-L-methionine to nm(5)s(2)U34, to form mnm(5)s(2)U34. The sequence is that of tRNA 5-methylaminomethyl-2-thiouridine biosynthesis bifunctional protein MnmC from Paracidovorax citrulli (strain AAC00-1) (Acidovorax citrulli).